The chain runs to 148 residues: uncharacterized protein (148 aa).

The region spanning 1-144 (MNIKRITTEA…PHVLMTKEIS (144 aa)) is the N-acetyltransferase domain.

This is an uncharacterized protein from Bacillus subtilis (strain 168).